We begin with the raw amino-acid sequence, 138 residues long: Superoxide dismutase [Mn] (138 aa).

Mn(2+)-binding residues include H1, H49, D133, and H137.

The protein belongs to the iron/manganese superoxide dismutase family. It depends on Mn(2+) as a cofactor.

The catalysed reaction is 2 superoxide + 2 H(+) = H2O2 + O2. Destroys superoxide anion radicals which are normally produced within the cells and which are toxic to biological systems. This is Superoxide dismutase [Mn] (sodA) from Mycobacterium celatum.